A 210-amino-acid chain; its full sequence is MTTLETLKWDGKKSGKVTLDLTVAKETSSADLIHRAVLRQLANKRQGTASTLTRSEVRGGGRKPYKQKGTGRARQGSIRTPLRPGGGIIFGPKPRSYNLDMNRKERRLALRTALMSRVSDMKAVEDFGSTLKQPKTSDIINGLARLGIQKNEKVLVILDSPSDVIKKSINNIEKVKLIAADQLNVFDILNANKLLIGQSAIDKIQEVYAS.

The segment at 46-89 (QGTASTLTRSEVRGGGRKPYKQKGTGRARQGSIRTPLRPGGGII) is disordered. Positions 60–71 (GGRKPYKQKGTG) are enriched in basic residues.

This sequence belongs to the universal ribosomal protein uL4 family. In terms of assembly, part of the 50S ribosomal subunit.

Its function is as follows. One of the primary rRNA binding proteins, this protein initially binds near the 5'-end of the 23S rRNA. It is important during the early stages of 50S assembly. It makes multiple contacts with different domains of the 23S rRNA in the assembled 50S subunit and ribosome. Forms part of the polypeptide exit tunnel. The chain is Large ribosomal subunit protein uL4 from Prochlorococcus marinus (strain MIT 9215).